The chain runs to 259 residues: tRNA pseudouridine synthase A (259 aa).

D52 serves as the catalytic Nucleophile. Y111 serves as a coordination point for substrate.

It belongs to the tRNA pseudouridine synthase TruA family. In terms of assembly, homodimer.

It catalyses the reaction uridine(38/39/40) in tRNA = pseudouridine(38/39/40) in tRNA. Functionally, formation of pseudouridine at positions 38, 39 and 40 in the anticodon stem and loop of transfer RNAs. The polypeptide is tRNA pseudouridine synthase A (Ruegeria sp. (strain TM1040) (Silicibacter sp.)).